A 151-amino-acid chain; its full sequence is Large ribosomal subunit protein bL28c (151 aa).

A chloroplast-targeting transit peptide spans Met1–Ala74.

This sequence belongs to the bacterial ribosomal protein bL28 family. Part of the 50S ribosomal subunit.

The protein localises to the plastid. Its subcellular location is the chloroplast. The protein is Large ribosomal subunit protein bL28c (RPL28) of Nicotiana tabacum (Common tobacco).